The following is a 259-amino-acid chain: Deoxyribose-phosphate aldolase (259 aa).

The active-site Proton donor/acceptor is the Asp102. Lys167 (schiff-base intermediate with acetaldehyde) is an active-site residue. The Proton donor/acceptor role is filled by Lys201.

This sequence belongs to the DeoC/FbaB aldolase family. DeoC type 2 subfamily.

The protein localises to the cytoplasm. The enzyme catalyses 2-deoxy-D-ribose 5-phosphate = D-glyceraldehyde 3-phosphate + acetaldehyde. The protein operates within carbohydrate degradation; 2-deoxy-D-ribose 1-phosphate degradation; D-glyceraldehyde 3-phosphate and acetaldehyde from 2-deoxy-alpha-D-ribose 1-phosphate: step 2/2. Catalyzes a reversible aldol reaction between acetaldehyde and D-glyceraldehyde 3-phosphate to generate 2-deoxy-D-ribose 5-phosphate. The chain is Deoxyribose-phosphate aldolase from Cronobacter sakazakii (strain ATCC BAA-894) (Enterobacter sakazakii).